We begin with the raw amino-acid sequence, 208 residues long: Uracil phosphoribosyltransferase (208 aa).

Residues Arg-78, Arg-103, and 130 to 138 contribute to the 5-phospho-alpha-D-ribose 1-diphosphate site; that span reads DPMLATGHS. Uracil-binding positions include Ile-193 and 198 to 200; that span reads GDA. 5-phospho-alpha-D-ribose 1-diphosphate is bound at residue Asp-199.

It belongs to the UPRTase family. Mg(2+) is required as a cofactor.

The enzyme catalyses UMP + diphosphate = 5-phospho-alpha-D-ribose 1-diphosphate + uracil. The protein operates within pyrimidine metabolism; UMP biosynthesis via salvage pathway; UMP from uracil: step 1/1. Its activity is regulated as follows. Allosterically activated by GTP. Catalyzes the conversion of uracil and 5-phospho-alpha-D-ribose 1-diphosphate (PRPP) to UMP and diphosphate. The chain is Uracil phosphoribosyltransferase from Brucella anthropi (strain ATCC 49188 / DSM 6882 / CCUG 24695 / JCM 21032 / LMG 3331 / NBRC 15819 / NCTC 12168 / Alc 37) (Ochrobactrum anthropi).